Reading from the N-terminus, the 190-residue chain is MVARGETRSAALLAVALQVLIRDGYDRFSMDSVAALAHASKTTIYRRWSNKAELIKAALDAHDASFNDEVFDTGGLRTDLIATMGMLRRKAQALPPTLYPDLIRAMEHDETLSDAIRRHLADPGLSPFDAPLSRAVGRGEAGVDVDRQLIHDVAEAMLTHRLTLGGPLDDAFIGRLVDDVLLVLIRPGAR.

In terms of domain architecture, HTH tetR-type spans 6–66; the sequence is ETRSAALLAV…AALDAHDASF (61 aa). Residues 29 to 48 constitute a DNA-binding region (H-T-H motif); sequence SMDSVAALAHASKTTIYRRW.

In terms of assembly, homodimer.

Its function is as follows. Binds to its own palindromic promoter and represses transcription of its operon; addition of tetracycline or doxycycline (but not tigecycline) interferes with DNA binding. Addition of TetX to the DNA-TetR-antibiotic complex restores DNA binding. The chain is DNA-binding transcriptional repressor TetR from Mycobacteroides abscessus (strain ATCC 19977 / DSM 44196 / CCUG 20993 / CIP 104536 / JCM 13569 / NCTC 13031 / TMC 1543 / L948) (Mycobacterium abscessus).